The chain runs to 101 residues: Pro-corazonin (101 aa).

A signal peptide spans 1-19 (MVTNITLILTLMTLASVTA). The residue at position 20 (glutamine 20) is a Pyrrolidone carboxylic acid. Asparagine 30 carries the asparagine amide modification.

Belongs to the corazonin family.

The protein localises to the secreted. Its function is as follows. Cardioactive peptide. Corazonin is probably involved in the physiological regulation of the heart beat. This Bombyx mori (Silk moth) protein is Pro-corazonin (crz).